Reading from the N-terminus, the 381-residue chain is Cytosolic acyl coenzyme A thioester hydrolase (381 aa).

Residues 51–169 enclose the HotDog ACOT-type 1 domain; sequence LGHCVTMGRI…TLWYVPLSLK (119 aa). Asn67 is an active-site residue. Lys169 and Lys199 each carry N6-acetyllysine. The region spanning 225 to 339 is the HotDog ACOT-type 2 domain; that stretch reads SYSQSSLIHL…FFTYVSLNQE (115 aa). The active site involves Asp256. Lys284 is subject to N6-acetyllysine. The segment at 342 to 381 is disordered; the sequence is PMPVPQLVPETEDEKKRFEEGKGRYLQMKAKRQGHTEPQP. Residues 354-364 are compositionally biased toward basic and acidic residues; that stretch reads DEKKRFEEGKG.

In terms of assembly, homohexamer. Widely expressed with highest levels in brain. High levels also found in thymus, large intestine and testis. Negligible in muscle and adipose tissue. In the central and peripheral nervous systems, displays a predominantly neuronal localization with highest expression in cell bodies and neurites.

It localises to the cytoplasm. The protein localises to the cytosol. The catalysed reaction is hexadecanoyl-CoA + H2O = hexadecanoate + CoA + H(+). It catalyses the reaction dodecanoyl-CoA + H2O = dodecanoate + CoA + H(+). The enzyme catalyses tetradecanoyl-CoA + H2O = tetradecanoate + CoA + H(+). It carries out the reaction decanoyl-CoA + H2O = decanoate + CoA + H(+). The catalysed reaction is octanoyl-CoA + H2O = octanoate + CoA + H(+). It catalyses the reaction octadecanoyl-CoA + H2O = octadecanoate + CoA + H(+). The enzyme catalyses (9Z)-octadecenoyl-CoA + H2O = (9Z)-octadecenoate + CoA + H(+). It functions in the pathway lipid metabolism; fatty acid metabolism. Functionally, catalyzes the hydrolysis of acyl-CoAs into free fatty acids and coenzyme A (CoASH), regulating their respective intracellular levels. Preferentially hydrolyzes palmitoyl-CoA, but has a broad specificity acting on other fatty acyl-CoAs with chain-lengths of C8-C18. May play an important physiological function in brain. The protein is Cytosolic acyl coenzyme A thioester hydrolase (Acot7) of Mus musculus (Mouse).